A 303-amino-acid polypeptide reads, in one-letter code: Bifunctional protein FolD 2 (303 aa).

NADP(+)-binding positions include 169-171 (GRS), Ser194, and Ile235.

This sequence belongs to the tetrahydrofolate dehydrogenase/cyclohydrolase family. In terms of assembly, homodimer.

The catalysed reaction is (6R)-5,10-methylene-5,6,7,8-tetrahydrofolate + NADP(+) = (6R)-5,10-methenyltetrahydrofolate + NADPH. The enzyme catalyses (6R)-5,10-methenyltetrahydrofolate + H2O = (6R)-10-formyltetrahydrofolate + H(+). The protein operates within one-carbon metabolism; tetrahydrofolate interconversion. Its function is as follows. Catalyzes the oxidation of 5,10-methylenetetrahydrofolate to 5,10-methenyltetrahydrofolate and then the hydrolysis of 5,10-methenyltetrahydrofolate to 10-formyltetrahydrofolate. The sequence is that of Bifunctional protein FolD 2 from Pseudomonas putida (strain GB-1).